Consider the following 277-residue polypeptide: Alpha carbonic anhydrase 3 (277 aa).

The first 19 residues, 1-19 (MKTIILFVTFLALSSSSLA), serve as a signal peptide directing secretion. The Alpha-carbonic anhydrase domain maps to 24–259 (TEFHYKPGEI…LNGRLVYLNE (236 aa)). Cysteines 49 and 209 form a disulfide. N70 and N107 each carry an N-linked (GlcNAc...) asparagine glycan. Residues H117, H119, and H136 each coordinate Zn(2+). Position 205-206 (205-206 (TT)) interacts with substrate. The segment at 257–277 (LNEQSSPSPTPRLRIPRVGPV) is disordered.

Belongs to the alpha-class carbonic anhydrase family. It depends on Zn(2+) as a cofactor. In terms of processing, N-glycosylated. Expressed in flowers and siliques.

The protein localises to the plastid. It is found in the chloroplast stroma. The enzyme catalyses hydrogencarbonate + H(+) = CO2 + H2O. In terms of biological role, reversible hydration of carbon dioxide. In Arabidopsis thaliana (Mouse-ear cress), this protein is Alpha carbonic anhydrase 3 (ACA3).